The following is a 590-amino-acid chain: DEAD-box ATP-dependent RNA helicase 27 (590 aa).

Positions methionine 1–isoleucine 92 are disordered. The span at serine 27–glutamate 62 shows a compositional bias: acidic residues. Residues alanine 40–glutamate 87 are a coiled coil. Basic and acidic residues predominate over residues glutamate 63–lysine 76. A Q motif motif is present at residues methionine 96–alanine 124. The region spanning isoleucine 127 to serine 302 is the Helicase ATP-binding domain. Alanine 140–threonine 147 provides a ligand contact to ATP. The DEAD box motif lies at aspartate 250–aspartate 253. In terms of domain architecture, Helicase C-terminal spans arginine 335 to leucine 488. The interval serine 551 to phenylalanine 590 is disordered. Over residues lysine 579–phenylalanine 590 the composition is skewed to basic and acidic residues.

Belongs to the DEAD box helicase family. DDX18/HAS1 subfamily.

The enzyme catalyses ATP + H2O = ADP + phosphate + H(+). This chain is DEAD-box ATP-dependent RNA helicase 27, found in Oryza sativa subsp. japonica (Rice).